The following is a 117-amino-acid chain: MSGVIAPDRVDDKRRMEHSQNMALTITIPAELASRLRASAEAEGKDVDAYAIDALHVMSDEDWGYTDDDAYWRELRAHSDEVRRDGGIPLEDVKRWVASWDTENELPPPEPRIKARG.

Functionally, antitoxin component of a type II toxin-antitoxin (TA) system. Neutralizes the effect of cognate toxin RelE3, but no other RelE or ParE toxin. This chain is Antitoxin RelB3 (relB3), found in Caulobacter vibrioides (strain ATCC 19089 / CIP 103742 / CB 15) (Caulobacter crescentus).